The following is a 454-amino-acid chain: Bifunctional protein GlmU (454 aa).

Residues 1–226 (MSLEIVILAA…AMEVQGVNDR (226 aa)) form a pyrophosphorylase region. UDP-N-acetyl-alpha-D-glucosamine is bound by residues 8 to 11 (LAAG), Lys-22, Gln-73, 78 to 79 (GT), 99 to 101 (YGD), Gly-136, Glu-151, Asn-166, and Asn-224. A Mg(2+)-binding site is contributed by Asp-101. Mg(2+) is bound at residue Asn-224. Residues 227-247 (MQQAQLERHYQRLRAEELMRQ) are linker. The tract at residues 248–454 (GVTLLDPQRL…NWKRPEKIKK (207 aa)) is N-acetyltransferase. UDP-N-acetyl-alpha-D-glucosamine is bound by residues Arg-330 and Lys-348. Catalysis depends on His-360, which acts as the Proton acceptor. 2 residues coordinate UDP-N-acetyl-alpha-D-glucosamine: Tyr-363 and Asn-374. Residues Ala-377, 383–384 (NY), Ser-402, Ala-420, and Arg-437 each bind acetyl-CoA.

The protein in the N-terminal section; belongs to the N-acetylglucosamine-1-phosphate uridyltransferase family. This sequence in the C-terminal section; belongs to the transferase hexapeptide repeat family. In terms of assembly, homotrimer. The cofactor is Mg(2+).

It localises to the cytoplasm. The catalysed reaction is alpha-D-glucosamine 1-phosphate + acetyl-CoA = N-acetyl-alpha-D-glucosamine 1-phosphate + CoA + H(+). The enzyme catalyses N-acetyl-alpha-D-glucosamine 1-phosphate + UTP + H(+) = UDP-N-acetyl-alpha-D-glucosamine + diphosphate. The protein operates within nucleotide-sugar biosynthesis; UDP-N-acetyl-alpha-D-glucosamine biosynthesis; N-acetyl-alpha-D-glucosamine 1-phosphate from alpha-D-glucosamine 6-phosphate (route II): step 2/2. It participates in nucleotide-sugar biosynthesis; UDP-N-acetyl-alpha-D-glucosamine biosynthesis; UDP-N-acetyl-alpha-D-glucosamine from N-acetyl-alpha-D-glucosamine 1-phosphate: step 1/1. It functions in the pathway bacterial outer membrane biogenesis; LPS lipid A biosynthesis. Catalyzes the last two sequential reactions in the de novo biosynthetic pathway for UDP-N-acetylglucosamine (UDP-GlcNAc). The C-terminal domain catalyzes the transfer of acetyl group from acetyl coenzyme A to glucosamine-1-phosphate (GlcN-1-P) to produce N-acetylglucosamine-1-phosphate (GlcNAc-1-P), which is converted into UDP-GlcNAc by the transfer of uridine 5-monophosphate (from uridine 5-triphosphate), a reaction catalyzed by the N-terminal domain. This Pseudomonas aeruginosa (strain LESB58) protein is Bifunctional protein GlmU.